A 294-amino-acid chain; its full sequence is Protoheme IX farnesyltransferase (294 aa).

8 helical membrane-spanning segments follow: residues 19-39 (PKQT…AGGM), 41-61 (LDAL…TTSV), 89-109 (VEAL…SYLI), 111-131 (PWTA…YTMW), 138-158 (LSII…WAAA), 166-186 (AIMI…YISI), 218-238 (VLMI…PIFL), and 272-292 (SPVE…RILW).

Belongs to the UbiA prenyltransferase family. Protoheme IX farnesyltransferase subfamily.

It is found in the cell membrane. The enzyme catalyses heme b + (2E,6E)-farnesyl diphosphate + H2O = Fe(II)-heme o + diphosphate. Its pathway is porphyrin-containing compound metabolism; heme O biosynthesis; heme O from protoheme: step 1/1. Functionally, converts heme B (protoheme IX) to heme O by substitution of the vinyl group on carbon 2 of heme B porphyrin ring with a hydroxyethyl farnesyl side group. The protein is Protoheme IX farnesyltransferase of Korarchaeum cryptofilum (strain OPF8).